A 118-amino-acid chain; its full sequence is Ribonuclease P protein component (118 aa).

The protein belongs to the RnpA family. As to quaternary structure, consists of a catalytic RNA component (M1 or rnpB) and a protein subunit.

It carries out the reaction Endonucleolytic cleavage of RNA, removing 5'-extranucleotides from tRNA precursor.. Its function is as follows. RNaseP catalyzes the removal of the 5'-leader sequence from pre-tRNA to produce the mature 5'-terminus. It can also cleave other RNA substrates such as 4.5S RNA. The protein component plays an auxiliary but essential role in vivo by binding to the 5'-leader sequence and broadening the substrate specificity of the ribozyme. The sequence is that of Ribonuclease P protein component from Enterococcus faecalis (strain ATCC 700802 / V583).